The primary structure comprises 419 residues: Glutamyl-tRNA reductase (419 aa).

Substrate is bound by residues 49 to 52, Ser-107, 112 to 114, and Gln-118; these read TCNR and EPQ. Cys-50 functions as the Nucleophile in the catalytic mechanism. An NADP(+)-binding site is contributed by 187–192; it reads GAGETI.

The protein belongs to the glutamyl-tRNA reductase family. In terms of assembly, homodimer.

The enzyme catalyses (S)-4-amino-5-oxopentanoate + tRNA(Glu) + NADP(+) = L-glutamyl-tRNA(Glu) + NADPH + H(+). The protein operates within porphyrin-containing compound metabolism; protoporphyrin-IX biosynthesis; 5-aminolevulinate from L-glutamyl-tRNA(Glu): step 1/2. Catalyzes the NADPH-dependent reduction of glutamyl-tRNA(Glu) to glutamate 1-semialdehyde (GSA). In Vibrio vulnificus (strain CMCP6), this protein is Glutamyl-tRNA reductase.